The primary structure comprises 291 residues: GTPase Era (291 aa).

The region spanning 2–167 (KSGFVSIIGR…LDEIVKYLDK (166 aa)) is the Era-type G domain. Residues 10–17 (GRTNAGKS) form a G1 region. Position 10-17 (10-17 (GRTNAGKS)) interacts with GTP. A G2 region spans residues 36–40 (NATRR). Positions 57-60 (DTPG) are G3. GTP contacts are provided by residues 57–61 (DTPGL) and 116–119 (NKVD). Residues 116–119 (NKVD) form a G4 region. The interval 146-148 (YSS) is G5. In terms of domain architecture, KH type-2 spans 186–274 (YRDFILESIY…LLKLFVTVKK (89 aa)).

The protein belongs to the TRAFAC class TrmE-Era-EngA-EngB-Septin-like GTPase superfamily. Era GTPase family. Monomer.

It is found in the cytoplasm. It localises to the cell inner membrane. Functionally, an essential GTPase that binds both GDP and GTP, with rapid nucleotide exchange. Plays a role in 16S rRNA processing and 30S ribosomal subunit biogenesis and possibly also in cell cycle regulation and energy metabolism. This chain is GTPase Era, found in Campylobacter jejuni subsp. jejuni serotype O:6 (strain 81116 / NCTC 11828).